Reading from the N-terminus, the 362-residue chain is MENGLCSIQARELDEFICDYLFPDTTFLTELRADIDSISAFLKERCFQGAAHPVRVSRVVMGGSYDEHTALKGKSEAKMVLFFNNLTSFEEQLKRRGEFVEEIQKHLCQLQQEKPFKVKFEVQSSEEPNSRSLSFKLSSPELQQEVEFDVQPAYDVLYELRNNTYAEPQFYNKVYAQLIHECTTLEKEGDFSICFTDLHQNFMRYRAPKLWNLIRLVKHWYQLCKEKLREPLPPQYALELLTVYVWEHSNKNQEKVTTAKNFRTFLELVAYYKNLRIYWTWYYDFRHQEVCAYLCRQLKKARPLILDPADPTRNVAGSDLQAWDLLAKEAQTWMQSSCFRNCDMSFVPTWDLSPERQECAFQ.

This sequence belongs to the 2-5A synthase family. In terms of tissue distribution, expressed at highest level in brain with lesser amounts in spleen, kidney, stomach, liver, intestine, ovary, skin and testis. Not detected in lung, thymus, heart and uterus.

Does not have 2'-5'-OAS activity, but can bind double-stranded RNA. The sequence is that of Inactive 2'-5' oligoadenylate synthetase 1C from Mus musculus (Mouse).